Consider the following 228-residue polypeptide: MTVIVLSGPIGAGKSSLTGILSKYLGTKPFYESVDDNPVLPLFYADPKKYAFLLQVYFLNTRFHSIKNALTQDNNVLDRSIYEDALFFQMNADIGRATSEEVDTYYELLHNMMGELDRMPKKNPDLLVHINVSYDTMIKRIKKRGRPYEQLSYDSTLEDYYKRLLRYYKPWYEKYDYSPKMVIDGDKYDFMSSEADREIVLDQIVDKLKEVGKLPMDWDKSTDIQIEA.

8 to 16 (GPIGAGKSS) contributes to the ATP binding site. The substrate site is built by glutamate 32, tyrosine 44, and glutamine 55. Aspartate 78 acts as the Proton acceptor in catalysis. Residues arginine 79, aspartate 84, and glutamate 149 each contribute to the substrate site.

This sequence belongs to the DCK/DGK family. Heterodimer of a deoxyadenosine (DAK) and a deoxyguanosine kinase (DGK).

It catalyses the reaction 2'-deoxyguanosine + ATP = dGMP + ADP + H(+). Its function is as follows. DGK/DAK plays an essential role in generating the deoxyribonucleotide precursors, dGTP and dATP, for DNA metabolism. This Lactobacillus acidophilus (strain ATCC 700396 / NCK56 / N2 / NCFM) protein is Deoxyguanosine kinase.